We begin with the raw amino-acid sequence, 402 residues long: Multidrug resistance protein MdtH (402 aa).

Over 1–12 the chain is Cytoplasmic; it reads MSRVSQARNLGK. The chain crosses the membrane as a helical span at residues 13–33; it reads YFLLIDNMLVVLGFFVVFPLI. Over 34 to 98 the chain is Periplasmic; it reads SIRFVDQMGW…GFATMGIAHE (65 aa). A helical transmembrane segment spans residues 99-116; that stretch reads PWLLWFSCLLSGLGGTLF. Residues 117–138 are Cytoplasmic-facing; that stretch reads DPPRSALVVKLIRPQQRGRFFS. The helical transmembrane segment at 139–159 threads the bilayer; that stretch reads LLMMQDSAGAVIGALLGSWLL. Residues 160–164 are Periplasmic-facing; sequence QYDFR. A helical membrane pass occupies residues 165–185; the sequence is LVCATGAVLFVLCAAFNAWLL. Residues 186–213 lie on the Cytoplasmic side of the membrane; that stretch reads PAWKLSTVRTPVREGMTRVMRDKRFVTY. Residues 214–234 traverse the membrane as a helical segment; that stretch reads VLTLAGYYMLAVQVMLMLPIM. The Periplasmic portion of the chain corresponds to 235–243; the sequence is VNDVAGAPS. The chain crosses the membrane as a helical span at residues 244–264; that stretch reads AVKWMYAIEACLSLTLLYPIA. The Cytoplasmic segment spans residues 265-276; sequence RWSEKHFRLEHR. A helical transmembrane segment spans residues 277–297; sequence LMAGLLIMSLSMMPVGMVSGL. Residues 298 to 299 are Periplasmic-facing; the sequence is QQ. Residues 300-320 traverse the membrane as a helical segment; the sequence is LFTLICLFYIGSIIAEPARET. Topologically, residues 321-339 are cytoplasmic; the sequence is LSASLADARARGSYMGCSR. A helical membrane pass occupies residues 340 to 360; it reads LGLAIGGAIGYIGGGWLFDLG. At 361–367 the chain is on the periplasmic side; sequence KSAHQPE. The helical transmembrane segment at 368 to 388 threads the bilayer; it reads LPWMMLGIIGIFTFLALGWQF. The Cytoplasmic portion of the chain corresponds to 389-402; that stretch reads SQKRAARRLLERDA.

The protein belongs to the major facilitator superfamily. DHA1 family. MdtH (TC 2.A.1.2.21) subfamily.

The protein resides in the cell inner membrane. Confers resistance to norfloxacin and enoxacin. The polypeptide is Multidrug resistance protein MdtH (Escherichia coli (strain SE11)).